The primary structure comprises 394 residues: Argininosuccinate synthase (394 aa).

ATP is bound by residues 7-15 (AYSGGLDTS) and alanine 35. Residue tyrosine 85 coordinates L-citrulline. ATP is bound at residue glycine 115. Threonine 117, asparagine 121, and aspartate 122 together coordinate L-aspartate. Position 121 (asparagine 121) interacts with L-citrulline. 5 residues coordinate L-citrulline: arginine 125, serine 174, serine 183, glutamate 258, and tyrosine 270.

It belongs to the argininosuccinate synthase family. Type 1 subfamily. As to quaternary structure, homotetramer.

The protein localises to the cytoplasm. It catalyses the reaction L-citrulline + L-aspartate + ATP = 2-(N(omega)-L-arginino)succinate + AMP + diphosphate + H(+). It participates in amino-acid biosynthesis; L-arginine biosynthesis; L-arginine from L-ornithine and carbamoyl phosphate: step 2/3. This chain is Argininosuccinate synthase, found in Methanopyrus kandleri (strain AV19 / DSM 6324 / JCM 9639 / NBRC 100938).